The following is a 96-amino-acid chain: Elicitor peptide 3 (96 aa).

A propeptide spanning residues 1–73 (MENLRNGEDN…EEEEEDGMTI (73 aa)) is cleaved from the precursor. Residues 32–96 (SGLESSSSSS…PSSGKGGKHN (65 aa)) form a disordered region. Positions 35–49 (ESSSSSSSSCDLSSS) are enriched in low complexity. Residues 52–71 (EEDESIDIKEEEEEEEEDGM) show a composition bias toward acidic residues.

The protein belongs to the brassicaceae elicitor peptide family.

Its function is as follows. Elicitor of plant defense. In Arabidopsis thaliana (Mouse-ear cress), this protein is Elicitor peptide 3 (PEP3).